A 536-amino-acid polypeptide reads, in one-letter code: Putative UDP-glucuronosyltransferase ugt-47 (536 aa).

Positions 1–21 (MFRYHSILLLAILYFFEYGLA) are cleaved as a signal peptide. N-linked (GlcNAc...) asparagine glycans are attached at residues asparagine 52 and asparagine 308. Residues 497–517 (IIVPCFFVAFYFIIFPFFKLF) form a helical membrane-spanning segment.

Belongs to the UDP-glycosyltransferase family.

The protein localises to the membrane. The catalysed reaction is glucuronate acceptor + UDP-alpha-D-glucuronate = acceptor beta-D-glucuronoside + UDP + H(+). In Caenorhabditis elegans, this protein is Putative UDP-glucuronosyltransferase ugt-47 (ugt-47).